Reading from the N-terminus, the 337-residue chain is Anthranilate phosphoribosyltransferase (337 aa).

5-phospho-alpha-D-ribose 1-diphosphate contacts are provided by residues Gly-79, 82–83, Thr-87, 89–92, 107–115, and Ser-119; these read GD, NVST, and KHGNRSVSS. An anthranilate-binding site is contributed by Gly-79. Residue Ser-91 participates in Mg(2+) binding. Asn-110 provides a ligand contact to anthranilate. Residue Arg-165 coordinates anthranilate. The Mg(2+) site is built by Asp-223 and Glu-224.

Belongs to the anthranilate phosphoribosyltransferase family. As to quaternary structure, homodimer. Mg(2+) serves as cofactor.

The enzyme catalyses N-(5-phospho-beta-D-ribosyl)anthranilate + diphosphate = 5-phospho-alpha-D-ribose 1-diphosphate + anthranilate. Its pathway is amino-acid biosynthesis; L-tryptophan biosynthesis; L-tryptophan from chorismate: step 2/5. In terms of biological role, catalyzes the transfer of the phosphoribosyl group of 5-phosphorylribose-1-pyrophosphate (PRPP) to anthranilate to yield N-(5'-phosphoribosyl)-anthranilate (PRA). This chain is Anthranilate phosphoribosyltransferase, found in Aeromonas salmonicida (strain A449).